The chain runs to 69 residues: Conotoxin Eb6.22 (69 aa).

A signal peptide spans 1-17 (VLIIAVLFLTACQLTTA). A propeptide spanning residues 18 to 41 (ETYSRGRQKHRARRSTDKNSKWTR) is cleaved from the precursor. 3 cysteine pairs are disulfide-bonded: Cys43-Cys57, Cys50-Cys61, and Cys56-Cys68.

It belongs to the conotoxin O1 superfamily. In terms of tissue distribution, expressed by the venom duct.

The protein localises to the secreted. The chain is Conotoxin Eb6.22 (E1) from Conus ebraeus (Hebrew cone).